Reading from the N-terminus, the 431-residue chain is tRNA(Ile)-lysidine synthase (431 aa).

Residue 19 to 24 coordinates ATP; sequence STGIDS.

The protein belongs to the tRNA(Ile)-lysidine synthase family.

The protein resides in the cytoplasm. It catalyses the reaction cytidine(34) in tRNA(Ile2) + L-lysine + ATP = lysidine(34) in tRNA(Ile2) + AMP + diphosphate + H(+). Its function is as follows. Ligates lysine onto the cytidine present at position 34 of the AUA codon-specific tRNA(Ile) that contains the anticodon CAU, in an ATP-dependent manner. Cytidine is converted to lysidine, thus changing the amino acid specificity of the tRNA from methionine to isoleucine. This chain is tRNA(Ile)-lysidine synthase, found in Staphylococcus aureus (strain MW2).